Here is a 247-residue protein sequence, read N- to C-terminus: uncharacterized protein (247 aa).

Positions 200 to 225 (SGKYSELKTKVNDIENDLRTLSSNTN) form a coiled coil.

This is an uncharacterized protein from Acanthamoeba polyphaga (Amoeba).